We begin with the raw amino-acid sequence, 378 residues long: 1-acyl-sn-glycerol-3-phosphate acyltransferase delta (378 aa).

A helical transmembrane segment spans residues 11–31 (FLCHLVFCYVFIASGLIVNAI). The HXXXXD motif motif lies at 96–101 (HKFEID). A run of 3 helical transmembrane segments spans residues 125 to 145 (ELAYVPIIGWMWYFVEMIFCT), 311 to 331 (WLFWASLLLYPFFQFLVSMVS), and 338 to 358 (LASLVLIFCMASMGVRWMIGV).

It belongs to the 1-acyl-sn-glycerol-3-phosphate acyltransferase family.

The protein resides in the endoplasmic reticulum membrane. It catalyses the reaction a 1-acyl-sn-glycero-3-phosphate + an acyl-CoA = a 1,2-diacyl-sn-glycero-3-phosphate + CoA. The catalysed reaction is (4Z,7Z,10Z,13Z,16Z,19Z)-docosahexaenoyl-CoA + 1-hexadecanoyl-sn-glycero-3-phosphate = 1-hexadecanoyl-2-(4Z,7Z,10Z,13Z,16Z,19Z-docosahexaenoyl)-sn-glycero-3-phosphate + CoA. The enzyme catalyses 1-octadecanoyl-sn-glycero-3-phosphate + (9Z,12Z)-octadecadienoyl-CoA = 1-octadecanoyl-2-(9Z,12Z-octadecadienoyl)-sn-glycero-3-phosphate + CoA. It carries out the reaction 1-octadecanoyl-sn-glycero-3-phosphate + (4Z,7Z,10Z,13Z,16Z,19Z)-docosahexaenoyl-CoA = 1-octadecanoyl-2-(4Z,7Z,10Z,13Z,16Z,19Z-docosahexaenoyl)-sn-glycero-3-phosphate + CoA. It catalyses the reaction (4Z,7Z,10Z,13Z,16Z,19Z)-docosahexaenoyl-CoA + 1-(9Z-octadecenoyl)-sn-glycero-3-phosphate = 1-(9Z-octadecenoyl)-2-(4Z,7Z,10Z,13Z,16Z,19Z-docosahexaenoyl)-sn-glycero-3-phosphate + CoA. Its pathway is phospholipid metabolism; CDP-diacylglycerol biosynthesis; CDP-diacylglycerol from sn-glycerol 3-phosphate: step 2/3. Converts 1-acyl-sn-glycerol-3-phosphate (lysophosphatidic acid or LPA) into 1,2-diacyl-sn-glycerol-3-phosphate (phosphatidic acid or PA) by incorporating an acyl moiety at the sn-2 position of the glycerol backbone. Exhibits high acyl-CoA specificity for polyunsaturated fatty acyl-CoA, especially docosahexaenoyl-CoA (22:6-CoA, DHA-CoA). The protein is 1-acyl-sn-glycerol-3-phosphate acyltransferase delta (Agpat4) of Rattus norvegicus (Rat).